Reading from the N-terminus, the 213-residue chain is Probable GTP-binding protein EngB (213 aa).

The EngB-type G domain maps to 25–203 (EGTEVAFAGR…EDVLNGWLLP (179 aa)). GTP is bound by residues 33 to 40 (GRSNAGKS), 60 to 64 (GRTQL), 80 to 83 (DLPG), 147 to 150 (TKAD), and 179 to 184 (AQMFSA). Mg(2+)-binding residues include serine 40 and threonine 62.

The protein belongs to the TRAFAC class TrmE-Era-EngA-EngB-Septin-like GTPase superfamily. EngB GTPase family. Mg(2+) is required as a cofactor.

Necessary for normal cell division and for the maintenance of normal septation. The polypeptide is Probable GTP-binding protein EngB (Saccharophagus degradans (strain 2-40 / ATCC 43961 / DSM 17024)).